The chain runs to 359 residues: DNA replication and repair protein RecF (359 aa).

30–37 (GPNGSGKT) contacts ATP.

The protein belongs to the RecF family.

The protein resides in the cytoplasm. Its function is as follows. The RecF protein is involved in DNA metabolism; it is required for DNA replication and normal SOS inducibility. RecF binds preferentially to single-stranded, linear DNA. It also seems to bind ATP. In Vibrio vulnificus (strain CMCP6), this protein is DNA replication and repair protein RecF.